Consider the following 24-residue polypeptide: FLPAIVGAAGKFLPKIFCAISKKC.

An intrachain disulfide couples Cys18 to Cys24.

In terms of tissue distribution, expressed by the skin glands.

The protein localises to the secreted. In terms of biological role, antibacterial activity against Gram-negative bacterium E.coli. The chain is Brevinin-1Sb from Lithobates sphenocephalus (Southern leopard frog).